We begin with the raw amino-acid sequence, 337 residues long: Ribonucleoside-diphosphate reductase small subunit (337 aa).

Positions 1–22 (MDPAVSPASTDPLDTHASGAGA) are disordered. D91, E121, and H124 together coordinate Fe cation. Residue Y128 is part of the active site. Residues 177 to 197 (FILMILIEGVFFAASFAAIAY) form a helical membrane-spanning segment. Fe cation contacts are provided by E184, E218, and H221.

It belongs to the ribonucleoside diphosphate reductase small chain family. In terms of assembly, heterotetramer composed of a homodimer of the large subunit (R1) and a homodimer of the small subunit (R2). Larger multisubunit protein complex are also active, composed of (R1)n(R2)n. Fe cation is required as a cofactor.

The protein resides in the host membrane. It carries out the reaction a 2'-deoxyribonucleoside 5'-diphosphate + [thioredoxin]-disulfide + H2O = a ribonucleoside 5'-diphosphate + [thioredoxin]-dithiol. Its function is as follows. Ribonucleoside-diphosphate reductase holoenzyme provides the precursors necessary for viral DNA synthesis. Allows virus growth in non-dividing cells, as well as reactivation from latency in infected hosts. Catalyzes the biosynthesis of deoxyribonucleotides from the corresponding ribonucleotides. This Human herpesvirus 2 (strain 333) (HHV-2) protein is Ribonucleoside-diphosphate reductase small subunit.